A 415-amino-acid chain; its full sequence is Squalene synthase 12 (415 aa).

A run of 2 helical transmembrane segments spans residues 281 to 301 (AIFRFCAIPQIMAIGTLALCF) and 391 to 411 (LIAIIFIILAILYAYLSSNLL).

It belongs to the phytoene/squalene synthase family. The cofactor is Mg(2+). Requires Mn(2+) as cofactor.

It localises to the endoplasmic reticulum membrane. The enzyme catalyses 2 (2E,6E)-farnesyl diphosphate + NADH + H(+) = squalene + 2 diphosphate + NAD(+). The catalysed reaction is 2 (2E,6E)-farnesyl diphosphate + NADPH + H(+) = squalene + 2 diphosphate + NADP(+). It functions in the pathway terpene metabolism; lanosterol biosynthesis; lanosterol from farnesyl diphosphate: step 1/3. Its function is as follows. Component of the triterpene saponins (e.g. ginsenosides or panaxosides) and phytosterols biosynthetic pathways. Catalyzes the biosynthesis of squalene. The chain is Squalene synthase 12 from Panax ginseng (Korean ginseng).